The primary structure comprises 433 residues: Gamma-glutamyl phosphate reductase (433 aa).

This sequence belongs to the gamma-glutamyl phosphate reductase family.

Its subcellular location is the cytoplasm. The enzyme catalyses L-glutamate 5-semialdehyde + phosphate + NADP(+) = L-glutamyl 5-phosphate + NADPH + H(+). The protein operates within amino-acid biosynthesis; L-proline biosynthesis; L-glutamate 5-semialdehyde from L-glutamate: step 2/2. Catalyzes the NADPH-dependent reduction of L-glutamate 5-phosphate into L-glutamate 5-semialdehyde and phosphate. The product spontaneously undergoes cyclization to form 1-pyrroline-5-carboxylate. In Cyanothece sp. (strain PCC 7425 / ATCC 29141), this protein is Gamma-glutamyl phosphate reductase.